We begin with the raw amino-acid sequence, 151 residues long: Tetratricopeptide repeat protein 32 (151 aa).

TPR repeat units follow at residues 8 to 41, 58 to 91, and 92 to 125; these read SHAT…CACA, ATAY…QPNF, and EVPY…NPGF.

The chain is Tetratricopeptide repeat protein 32 (TTC32) from Homo sapiens (Human).